Consider the following 920-residue polypeptide: Bifunctional aspartokinase/homoserine dehydrogenase 1, chloroplastic (920 aa).

The disordered stretch occupies residues 1-21 (MRSLTVASRHPGAAFSTRRRP). The N-terminal 92 residues, 1–92 (MRSLTVASRH…EAIADLPKGD (92 aa)), are a transit peptide targeting the chloroplast. The aspartokinase stretch occupies residues 93-341 (MWSVHKFGGT…VSEAVILSTL (249 aa)). The interval 342-566 (SYQEAWEMSY…LSKTTLAVGI (225 aa)) is interface. 2 consecutive ACT domains span residues 416–491 (VEGT…VIHN) and 497–574 (TVGL…LIGR). The interval 567–920 (IGPGLIGRTL…RLSSYLGAPS (354 aa)) is homoserine dehydrogenase. NAD(+) contacts are provided by Ile572 and Ala601. Ile572 is an NADP(+) binding site. Ile572 is a binding site for NADPH. Arg604, Thr653, and Lys677 together coordinate NADP(+). Thr653 provides a ligand contact to NAD(+). The NADPH site is built by Thr653 and Lys677. Residues Glu704, Val707, Ala709, and Leu711 each coordinate Na(+). 2 residues coordinate NADP(+): Gly762 and Glu765. The L-homoserine site is built by Glu765 and Asp776. Lys780 serves as the catalytic Proton donor. Gly897 provides a ligand contact to NAD(+). NADP(+) is bound at residue Gly897. NADPH is bound at residue Gly897.

This sequence in the N-terminal section; belongs to the aspartokinase family. The protein in the C-terminal section; belongs to the homoserine dehydrogenase family. As to quaternary structure, homo- or heterodimer. Requires a metal cation as cofactor.

It is found in the plastid. It localises to the chloroplast. The enzyme catalyses L-homoserine + NADP(+) = L-aspartate 4-semialdehyde + NADPH + H(+). It catalyses the reaction L-homoserine + NAD(+) = L-aspartate 4-semialdehyde + NADH + H(+). The catalysed reaction is L-aspartate + ATP = 4-phospho-L-aspartate + ADP. It functions in the pathway amino-acid biosynthesis; L-lysine biosynthesis via DAP pathway; (S)-tetrahydrodipicolinate from L-aspartate: step 1/4. Its pathway is amino-acid biosynthesis; L-methionine biosynthesis via de novo pathway; L-homoserine from L-aspartate: step 1/3. The protein operates within amino-acid biosynthesis; L-methionine biosynthesis via de novo pathway; L-homoserine from L-aspartate: step 3/3. It participates in amino-acid biosynthesis; L-threonine biosynthesis; L-threonine from L-aspartate: step 1/5. It functions in the pathway amino-acid biosynthesis; L-threonine biosynthesis; L-threonine from L-aspartate: step 3/5. Functionally, bifunctional aspartate kinase and homoserine dehydrogenase that catalyzes the first and the third steps toward the synthesis of lysine, methionine and threonine from aspartate. This Zea mays (Maize) protein is Bifunctional aspartokinase/homoserine dehydrogenase 1, chloroplastic (AKHSDH1).